Consider the following 481-residue polypeptide: Ribosomal RNA small subunit methyltransferase F (481 aa).

Residues 125 to 131, Glu149, Asp176, and Asp194 each bind S-adenosyl-L-methionine; that span reads AAAPGSK. The active-site Nucleophile is Cys247.

This sequence belongs to the class I-like SAM-binding methyltransferase superfamily. RsmB/NOP family.

The protein resides in the cytoplasm. It catalyses the reaction cytidine(1407) in 16S rRNA + S-adenosyl-L-methionine = 5-methylcytidine(1407) in 16S rRNA + S-adenosyl-L-homocysteine + H(+). Specifically methylates the cytosine at position 1407 (m5C1407) of 16S rRNA. In Psychromonas ingrahamii (strain DSM 17664 / CCUG 51855 / 37), this protein is Ribosomal RNA small subunit methyltransferase F.